The primary structure comprises 442 residues: Ribosomal protein uS12 methylthiotransferase RimO (442 aa).

The MTTase N-terminal domain maps to 13–129; the sequence is RSIFLLSLGC…ILNILGTAYD (117 aa). Positions 22, 58, 92, 153, 157, and 160 each coordinate [4Fe-4S] cluster. Residues 139–369 form the Radical SAM core domain; sequence LSPSHYAWLK…MELQEGISEK (231 aa). Residues 372 to 439 form the TRAM domain; it reads RALEEKALKV…AYELVGRIKN (68 aa).

The protein belongs to the methylthiotransferase family. RimO subfamily. Requires [4Fe-4S] cluster as cofactor.

It is found in the cytoplasm. The catalysed reaction is L-aspartate(89)-[ribosomal protein uS12]-hydrogen + (sulfur carrier)-SH + AH2 + 2 S-adenosyl-L-methionine = 3-methylsulfanyl-L-aspartate(89)-[ribosomal protein uS12]-hydrogen + (sulfur carrier)-H + 5'-deoxyadenosine + L-methionine + A + S-adenosyl-L-homocysteine + 2 H(+). Its function is as follows. Catalyzes the methylthiolation of an aspartic acid residue of ribosomal protein uS12. This is Ribosomal protein uS12 methylthiotransferase RimO from Chlorobium phaeobacteroides (strain BS1).